The following is a 455-amino-acid chain: MDPNESPPNQFRHVVAMPYPGRGHINPMMNLCKRLVRRYPNLHVTFVVTEEWLGFIGPDPKPDRIHFSTLPNLIPSELVRAKDFIGFIDAVYTRLEEPFEKLLDSLNSPPPSVIFADTYVIWAVRVGRKRNIPVVSLWTMSATILSFFLHSDLLISHGHALFEPSEEEVVDYVPGLSPTKLRDLPPIFDGYSDRVFKTAKLCFDELPGARSLLFTTAYELEHKAIDAFTSKLDIPVYAIGPLIPFEELSVQNDNKEPNYIQWLEEQPEGSVLYISQGSFLSVSEAQMEEIVKGLRESGVRFLWVARGGELKLKEALEGSLGVVVSWCDQLRVLCHKAVGGFWTHCGFNSTLEGIYSGVPMLAFPLFWDQILNAKMIVEDWRVGMRIERTKKNELLIGREEIKEVVKRFMDRESEEGKEMRRRACDLSEISRGAVAKSGSSNVNIDEFVRHITNTN.

N-acetylmethionine is present on Met-1. UDP-alpha-D-glucose contacts are provided by residues Ser-278, 327–329 (CDQ), 344–352 (HCGFNSTLE), and 366–369 (FWDQ).

The protein belongs to the UDP-glycosyltransferase family.

In Arabidopsis thaliana (Mouse-ear cress), this protein is UDP-glycosyltransferase 87A2 (UGT87A2).